We begin with the raw amino-acid sequence, 221 residues long: PKHD-type hydroxylase P9303_20491 (221 aa).

The region spanning 80–174 (HIHGVMFSRS…RLVCVGWIQS (95 aa)) is the Fe2OG dioxygenase domain. Fe cation is bound by residues histidine 98, aspartate 100, and histidine 155. Arginine 165 serves as a coordination point for 2-oxoglutarate.

Fe(2+) serves as cofactor. It depends on L-ascorbate as a cofactor.

The sequence is that of PKHD-type hydroxylase P9303_20491 from Prochlorococcus marinus (strain MIT 9303).